The chain runs to 152 residues: Mediator of RNA polymerase II transcription subunit 9 (152 aa).

A coiled-coil region spans residues 98-150 (IKRCKALLQENEEVRNLLANSIEEWENIIADKEQQLRVKAKVLRDLDARIEKI).

Belongs to the Mediator complex subunit 9 family. In terms of assembly, component of the Mediator complex.

The protein localises to the nucleus. In terms of biological role, component of the Mediator complex, a coactivator involved in the regulated transcription of nearly all RNA polymerase II-dependent genes. Mediator functions as a bridge to convey information from gene-specific regulatory proteins to the basal RNA polymerase II transcription machinery. Mediator is recruited to promoters by direct interactions with regulatory proteins and serves as a scaffold for the assembly of a functional preinitiation complex with RNA polymerase II and the general transcription factors. The polypeptide is Mediator of RNA polymerase II transcription subunit 9 (CSE2) (Candida glabrata (strain ATCC 2001 / BCRC 20586 / JCM 3761 / NBRC 0622 / NRRL Y-65 / CBS 138) (Yeast)).